Reading from the N-terminus, the 171-residue chain is Adenine phosphoribosyltransferase (171 aa).

This sequence belongs to the purine/pyrimidine phosphoribosyltransferase family. In terms of assembly, homodimer.

Its subcellular location is the cytoplasm. The catalysed reaction is AMP + diphosphate = 5-phospho-alpha-D-ribose 1-diphosphate + adenine. It functions in the pathway purine metabolism; AMP biosynthesis via salvage pathway; AMP from adenine: step 1/1. In terms of biological role, catalyzes a salvage reaction resulting in the formation of AMP, that is energically less costly than de novo synthesis. This chain is Adenine phosphoribosyltransferase, found in Gloeobacter violaceus (strain ATCC 29082 / PCC 7421).